The primary structure comprises 420 residues: Gamma-glutamyl phosphate reductase (420 aa).

It belongs to the gamma-glutamyl phosphate reductase family.

It is found in the cytoplasm. It carries out the reaction L-glutamate 5-semialdehyde + phosphate + NADP(+) = L-glutamyl 5-phosphate + NADPH + H(+). Its pathway is amino-acid biosynthesis; L-proline biosynthesis; L-glutamate 5-semialdehyde from L-glutamate: step 2/2. Catalyzes the NADPH-dependent reduction of L-glutamate 5-phosphate into L-glutamate 5-semialdehyde and phosphate. The product spontaneously undergoes cyclization to form 1-pyrroline-5-carboxylate. In Cereibacter sphaeroides (strain ATCC 17029 / ATH 2.4.9) (Rhodobacter sphaeroides), this protein is Gamma-glutamyl phosphate reductase.